A 244-amino-acid polypeptide reads, in one-letter code: Small ribosomal subunit protein eS4 (244 aa).

Positions 43-106 (LPLLLVVRDV…DENYLVLFDE (64 aa)) constitute an S4 RNA-binding domain.

This sequence belongs to the eukaryotic ribosomal protein eS4 family.

This is Small ribosomal subunit protein eS4 from Methanococcus maripaludis (strain C5 / ATCC BAA-1333).